The following is a 335-amino-acid chain: Fructose-1,6-bisphosphatase class 1 (335 aa).

Mg(2+) is bound by residues Glu-90, Asp-113, Leu-115, and Asp-116. Residues 116–119 (DGSS), Asn-209, Tyr-242, and Lys-272 contribute to the substrate site. Glu-278 provides a ligand contact to Mg(2+).

Belongs to the FBPase class 1 family. In terms of assembly, homotetramer. Mg(2+) serves as cofactor.

Its subcellular location is the cytoplasm. The catalysed reaction is beta-D-fructose 1,6-bisphosphate + H2O = beta-D-fructose 6-phosphate + phosphate. It participates in carbohydrate biosynthesis; gluconeogenesis. This chain is Fructose-1,6-bisphosphatase class 1, found in Histophilus somni (strain 2336) (Haemophilus somnus).